A 73-amino-acid polypeptide reads, in one-letter code: Translation initiation factor IF-1 (73 aa).

Positions 1 to 73 constitute an S1-like domain; the sequence is MPKKEGVIEI…TRGRIVYRYK (73 aa).

Belongs to the IF-1 family. Component of the 30S ribosomal translation pre-initiation complex which assembles on the 30S ribosome in the order IF-2 and IF-3, IF-1 and N-formylmethionyl-tRNA(fMet); mRNA recruitment can occur at any time during PIC assembly.

Its subcellular location is the cytoplasm. One of the essential components for the initiation of protein synthesis. Stabilizes the binding of IF-2 and IF-3 on the 30S subunit to which N-formylmethionyl-tRNA(fMet) subsequently binds. Helps modulate mRNA selection, yielding the 30S pre-initiation complex (PIC). Upon addition of the 50S ribosomal subunit IF-1, IF-2 and IF-3 are released leaving the mature 70S translation initiation complex. This Nocardioides sp. (strain ATCC BAA-499 / JS614) protein is Translation initiation factor IF-1.